The sequence spans 416 residues: Ribulose bisphosphate carboxylase large chain (416 aa).

The substrate site is built by Asn-100 and Thr-150. The active-site Proton acceptor is the Lys-152. A substrate-binding site is contributed by Lys-154. Mg(2+) is bound by residues Lys-178, Asp-180, and Glu-181. At Lys-178 the chain carries N6-carboxylysine. The active-site Proton acceptor is the His-271. 3 residues coordinate substrate: Arg-272, His-304, and Ser-356.

This sequence belongs to the RuBisCO large chain family. Type I subfamily. In terms of assembly, heterohexadecamer of 8 large chains and 8 small chains; disulfide-linked. The disulfide link is formed within the large subunit homodimers. Mg(2+) serves as cofactor. Post-translationally, the disulfide bond which can form in the large chain dimeric partners within the hexadecamer appears to be associated with oxidative stress and protein turnover.

The protein localises to the plastid. The protein resides in the chloroplast. It carries out the reaction 2 (2R)-3-phosphoglycerate + 2 H(+) = D-ribulose 1,5-bisphosphate + CO2 + H2O. The catalysed reaction is D-ribulose 1,5-bisphosphate + O2 = 2-phosphoglycolate + (2R)-3-phosphoglycerate + 2 H(+). In terms of biological role, ruBisCO catalyzes two reactions: the carboxylation of D-ribulose 1,5-bisphosphate, the primary event in carbon dioxide fixation, as well as the oxidative fragmentation of the pentose substrate in the photorespiration process. Both reactions occur simultaneously and in competition at the same active site. The polypeptide is Ribulose bisphosphate carboxylase large chain (rbcL) (Cheiropleuria bicuspis (Fern)).